The primary structure comprises 214 residues: Putative 3-methyladenine DNA glycosylase (214 aa).

This sequence belongs to the DNA glycosylase MPG family.

The sequence is that of Putative 3-methyladenine DNA glycosylase from Mycobacterium leprae (strain Br4923).